A 252-amino-acid polypeptide reads, in one-letter code: NAD(P)H-quinone oxidoreductase subunit K (252 aa).

[4Fe-4S] cluster contacts are provided by Cys73, Cys74, Cys138, and Cys169. Positions 225 to 236 (ASTQKQALSPSQ) are enriched in polar residues. The segment at 225–252 (ASTQKQALSPSQEIPLEDQNEATKEIAQ) is disordered.

The protein belongs to the complex I 20 kDa subunit family. In terms of assembly, NDH-1 can be composed of about 15 different subunits; different subcomplexes with different compositions have been identified which probably have different functions. [4Fe-4S] cluster serves as cofactor.

The protein localises to the cellular thylakoid membrane. The enzyme catalyses a plastoquinone + NADH + (n+1) H(+)(in) = a plastoquinol + NAD(+) + n H(+)(out). It carries out the reaction a plastoquinone + NADPH + (n+1) H(+)(in) = a plastoquinol + NADP(+) + n H(+)(out). In terms of biological role, NDH-1 shuttles electrons from an unknown electron donor, via FMN and iron-sulfur (Fe-S) centers, to quinones in the respiratory and/or the photosynthetic chain. The immediate electron acceptor for the enzyme in this species is believed to be plastoquinone. Couples the redox reaction to proton translocation, and thus conserves the redox energy in a proton gradient. Cyanobacterial NDH-1 also plays a role in inorganic carbon-concentration. The sequence is that of NAD(P)H-quinone oxidoreductase subunit K from Prochlorococcus marinus (strain MIT 9211).